We begin with the raw amino-acid sequence, 65 residues long: Large ribosomal subunit protein bL35 (65 aa).

Belongs to the bacterial ribosomal protein bL35 family.

This is Large ribosomal subunit protein bL35 from Clostridium botulinum (strain Loch Maree / Type A3).